We begin with the raw amino-acid sequence, 196 residues long: DnaA initiator-associating protein DiaA (196 aa).

The SIS domain maps to 34–196; the sequence is LVQSLLNGNK…DNTLFPHQDD (163 aa).

It belongs to the SIS family. DiaA subfamily. In terms of assembly, homotetramer; dimer of dimers.

Functionally, required for the timely initiation of chromosomal replication via direct interactions with the DnaA initiator protein. The polypeptide is DnaA initiator-associating protein DiaA (Yersinia pseudotuberculosis serotype O:1b (strain IP 31758)).